The chain runs to 206 residues: Dephospho-CoA kinase (206 aa).

The DPCK domain occupies Thr4–Phe200. Residue Gly12–Thr17 coordinates ATP.

Belongs to the CoaE family.

The protein resides in the cytoplasm. It carries out the reaction 3'-dephospho-CoA + ATP = ADP + CoA + H(+). It participates in cofactor biosynthesis; coenzyme A biosynthesis; CoA from (R)-pantothenate: step 5/5. In terms of biological role, catalyzes the phosphorylation of the 3'-hydroxyl group of dephosphocoenzyme A to form coenzyme A. The protein is Dephospho-CoA kinase of Salmonella choleraesuis (strain SC-B67).